Consider the following 114-residue polypeptide: Putative movement protein (114 aa).

The helical transmembrane segment at leucine 27–leucine 47 threads the bilayer. A disordered region spans residues arginine 79–phenylalanine 114. The segment covering glycine 86–arginine 97 has biased composition (basic and acidic residues). The span at glutamine 98–phenylalanine 114 shows a compositional bias: polar residues.

This sequence belongs to the nanovirus movement protein family.

The protein localises to the host cell membrane. In terms of biological role, may transport viral genome to neighboring plant cells directly through plasmosdesmata, without any budding. The movement protein allows efficient cell to cell propagation, by bypassing the host cell wall barrier. The chain is Putative movement protein (DNA-M) from Faba bean necrotic yellows virus (isolate Syrian SV292-88) (FBNYV).